A 500-amino-acid chain; its full sequence is MNFFPWLTIIVVLPISAGSLIFFLPHRGNKAIRWYTICICLLELLLITYVFCYHFQLDDPLIQLEEDYKWINIFDFHWRLGIDGLSIGPILLTGFITTLATLAAWPITRDSRLFHFLMLAMYSGQIGSFSSRDLLLFFIMWELELIPVYLLLSMWGGKKRLYSATKFILYTAGGSIFLLMGVLGMGLYGSNEPTLNFETSANQSYPVALEIMFYFGFLIAYAVKSPIIPLHTWLPDTHGEAHYSTCMLLAGILLKMGAYGLVRINMELLPHAHSIFSPWLMIVGTIQIIYAASTSPGQRNLKKRIAYSSVSHMGFTIIGIGSITDAGLNGAVLQIISHGFIGAALFFLAGTSYDRIRLVYLDEMGGIAISMPKIFTMFSSFSMASLALPGMSGFVAELIVFFGIITSPKYFLMPKILITFVMAIGMILTPIYSLSMSRQMFYGYKLFNAPNSYFFDSGPRELFVSISIFLPVIGIGIYPDFVLSLSVDKVEAILSNYFYK.

14 consecutive transmembrane segments (helical) span residues 3–23 (FFPW…LIFF), 37–57 (ICIC…HFQL), 87–107 (IGPI…AWPI), 113–130 (LFHF…GSFS), 134–154 (LLLF…LLSM), 167–187 (FILY…GMGL), 208–228 (ALEI…SPII), 242–262 (HYST…YGLV), 272–292 (AHSI…IYAA), 305–325 (IAYS…SITD), 330–350 (GAVL…FLAG), 386–406 (LALP…GIIT), 416–436 (ILIT…SLSM), and 462–482 (LFVS…PDFV).

The protein belongs to the complex I subunit 4 family.

It localises to the plastid. Its subcellular location is the chloroplast thylakoid membrane. The catalysed reaction is a plastoquinone + NADH + (n+1) H(+)(in) = a plastoquinol + NAD(+) + n H(+)(out). It carries out the reaction a plastoquinone + NADPH + (n+1) H(+)(in) = a plastoquinol + NADP(+) + n H(+)(out). The chain is NAD(P)H-quinone oxidoreductase chain 4, chloroplastic from Platanus occidentalis (Sycamore).